The sequence spans 389 residues: GTPase Obg (389 aa).

In terms of domain architecture, Obg spans 1–159 (MKFVDEAKIL…REVLLELMLL (159 aa)). The OBG-type G domain maps to 160–333 (ADVGMLGMPN…LCWDIMEFLK (174 aa)). Residues 166-173 (GMPNAGKS), 191-195 (FTTLV), 213-216 (DIPG), 283-286 (NKVD), and 314-316 (AAI) each bind GTP. The Mg(2+) site is built by Ser-173 and Thr-193. The interval 362 to 389 (QLENPDLEDDDEDWDEEDDDGVEFIYQR) is disordered. A compositionally biased stretch (acidic residues) spans 364–383 (ENPDLEDDDEDWDEEDDDGV).

It belongs to the TRAFAC class OBG-HflX-like GTPase superfamily. OBG GTPase family. In terms of assembly, monomer. Requires Mg(2+) as cofactor.

It localises to the cytoplasm. An essential GTPase which binds GTP, GDP and possibly (p)ppGpp with moderate affinity, with high nucleotide exchange rates and a fairly low GTP hydrolysis rate. Plays a role in control of the cell cycle, stress response, ribosome biogenesis and in those bacteria that undergo differentiation, in morphogenesis control. The polypeptide is GTPase Obg (Proteus mirabilis (strain HI4320)).